We begin with the raw amino-acid sequence, 307 residues long: Nucleotide-binding protein ACP_0619 (307 aa).

Residues 1-14 are compositionally biased toward basic and acidic residues; that stretch reads MPAPEPTRRAKKDA. Residues 1 to 23 form a disordered region; the sequence is MPAPEPTRRAKKDASASPSPAHP. 33 to 40 serves as a coordination point for ATP; it reads GLSGAGKG. A GTP-binding site is contributed by 83–86; that stretch reads DVRE.

The protein belongs to the RapZ-like family.

Functionally, displays ATPase and GTPase activities. In Acidobacterium capsulatum (strain ATCC 51196 / DSM 11244 / BCRC 80197 / JCM 7670 / NBRC 15755 / NCIMB 13165 / 161), this protein is Nucleotide-binding protein ACP_0619.